The chain runs to 501 residues: Aspartyl/glutamyl-tRNA(Asn/Gln) amidotransferase subunit B (501 aa).

Belongs to the GatB/GatE family. GatB subfamily. As to quaternary structure, heterotrimer of A, B and C subunits.

It carries out the reaction L-glutamyl-tRNA(Gln) + L-glutamine + ATP + H2O = L-glutaminyl-tRNA(Gln) + L-glutamate + ADP + phosphate + H(+). The catalysed reaction is L-aspartyl-tRNA(Asn) + L-glutamine + ATP + H2O = L-asparaginyl-tRNA(Asn) + L-glutamate + ADP + phosphate + 2 H(+). Allows the formation of correctly charged Asn-tRNA(Asn) or Gln-tRNA(Gln) through the transamidation of misacylated Asp-tRNA(Asn) or Glu-tRNA(Gln) in organisms which lack either or both of asparaginyl-tRNA or glutaminyl-tRNA synthetases. The reaction takes place in the presence of glutamine and ATP through an activated phospho-Asp-tRNA(Asn) or phospho-Glu-tRNA(Gln). This Agrobacterium fabrum (strain C58 / ATCC 33970) (Agrobacterium tumefaciens (strain C58)) protein is Aspartyl/glutamyl-tRNA(Asn/Gln) amidotransferase subunit B.